A 565-amino-acid chain; its full sequence is NAD-dependent malic enzyme (565 aa).

Tyrosine 104 serves as the catalytic Proton donor. Arginine 157 is an NAD(+) binding site. Lysine 175 (proton acceptor) is an active-site residue. Glutamate 246, aspartate 247, and aspartate 270 together coordinate a divalent metal cation. NAD(+) is bound by residues aspartate 270 and asparagine 418.

Belongs to the malic enzymes family. In terms of assembly, homotetramer. Mg(2+) serves as cofactor. Mn(2+) is required as a cofactor.

The enzyme catalyses (S)-malate + NAD(+) = pyruvate + CO2 + NADH. It carries out the reaction oxaloacetate + H(+) = pyruvate + CO2. In Escherichia coli O127:H6 (strain E2348/69 / EPEC), this protein is NAD-dependent malic enzyme.